A 471-amino-acid chain; its full sequence is Anthocyanidin 3-O-glucosyltransferase (471 aa).

The active-site Proton acceptor is the H24. H24 is a binding site for an anthocyanidin. The Charge relay role is filled by D130. T152 is a binding site for UDP-alpha-D-glucose. H161 serves as a coordination point for an anthocyanidin. The UDP-alpha-D-glucose site is built by A352, Q354, H369, W372, S374, and E377. Residue G392 coordinates an anthocyanidin. D393 and Q394 together coordinate UDP-alpha-D-glucose.

This sequence belongs to the UDP-glycosyltransferase family.

The catalysed reaction is an anthocyanidin + UDP-alpha-D-glucose + H(+) = an anthocyanidin 3-O-beta-D-glucoside + UDP. Its pathway is pigment biosynthesis; anthocyanin biosynthesis. In the presence of other necessary color factors, this glycosylation reaction allows the accumulation of anthocyanin pigments. The sequence is that of Anthocyanidin 3-O-glucosyltransferase (BZ1) from Zea mays (Maize).